The following is a 450-amino-acid chain: Molybdate-anion transporter (450 aa).

The next 12 membrane-spanning stretches (helical) occupy residues 1–21 (MLVT…GLEL), 43–63 (LDFY…APYL), 79–99 (ILYV…SSLV), 128–148 (FVLL…FSAF), 174–194 (AAFW…AVAS), 195–215 (WIGL…ALAG), 249–269 (VLLL…FVFL), 278–298 (GAPL…GSSL), 311–331 (PMHL…MLTF), 344–364 (FIAF…MSFL), 376–396 (GVLN…LLVL), and 409–429 (FSIC…LFTV).

This sequence belongs to the major facilitator superfamily.

The protein resides in the cell membrane. Mediates high-affinity intracellular uptake of the rare oligo-element molybdenum. The protein is Molybdate-anion transporter (MFSD5) of Pongo abelii (Sumatran orangutan).